A 293-amino-acid chain; its full sequence is tRNA pseudouridine synthase B (293 aa).

The active-site Nucleophile is D38.

This sequence belongs to the pseudouridine synthase TruB family. Type 1 subfamily.

It catalyses the reaction uridine(55) in tRNA = pseudouridine(55) in tRNA. Functionally, responsible for synthesis of pseudouridine from uracil-55 in the psi GC loop of transfer RNAs. The protein is tRNA pseudouridine synthase B of Solibacter usitatus (strain Ellin6076).